Reading from the N-terminus, the 69-residue chain is Ribosome modulation factor (69 aa).

This sequence belongs to the ribosome modulation factor family.

It is found in the cytoplasm. Functionally, during stationary phase, converts 70S ribosomes to an inactive dimeric form (100S ribosomes). The protein is Ribosome modulation factor of Chromohalobacter salexigens (strain ATCC BAA-138 / DSM 3043 / CIP 106854 / NCIMB 13768 / 1H11).